The chain runs to 199 residues: Small ribosomal subunit protein mS38 (199 aa).

The protein belongs to the mitochondrion-specific ribosomal protein mS38 family. Component of the mitochondrial small ribosomal subunit (mt-SSU). Mature mammalian 55S mitochondrial ribosomes consist of a small (28S) and a large (39S) subunit. The 28S small subunit contains a 12S ribosomal RNA (12S mt-rRNA) and 30 different proteins. The 39S large subunit contains a 16S rRNA (16S mt-rRNA), a copy of mitochondrial valine transfer RNA (mt-tRNA(Val)), which plays an integral structural role, and 52 different proteins. Interacts with Aurora-A. Ubiquitously expressed and especially highly expressed in heart, skeletal muscle and testis.

Its subcellular location is the mitochondrion matrix. The protein localises to the nucleus. In terms of biological role, may act as a negative regulator of Aurora-A kinase, by down-regulation through proteasome-dependent degradation. This chain is Small ribosomal subunit protein mS38 (AURKAIP1), found in Homo sapiens (Human).